The following is a 274-amino-acid chain: Bis(5'-nucleosyl)-tetraphosphatase, symmetrical (274 aa).

This sequence belongs to the Ap4A hydrolase family.

It carries out the reaction P(1),P(4)-bis(5'-adenosyl) tetraphosphate + H2O = 2 ADP + 2 H(+). Functionally, hydrolyzes diadenosine 5',5'''-P1,P4-tetraphosphate to yield ADP. This is Bis(5'-nucleosyl)-tetraphosphatase, symmetrical from Buchnera aphidicola subsp. Acyrthosiphon pisum (strain 5A).